Reading from the N-terminus, the 349-residue chain is Protein RecA (349 aa).

69 to 76 (GPESSGKT) is a binding site for ATP.

It belongs to the RecA family.

The protein localises to the cytoplasm. Its function is as follows. Can catalyze the hydrolysis of ATP in the presence of single-stranded DNA, the ATP-dependent uptake of single-stranded DNA by duplex DNA, and the ATP-dependent hybridization of homologous single-stranded DNAs. It interacts with LexA causing its activation and leading to its autocatalytic cleavage. The chain is Protein RecA from Rippkaea orientalis (strain PCC 8801 / RF-1) (Cyanothece sp. (strain PCC 8801)).